We begin with the raw amino-acid sequence, 292 residues long: Fat storage-inducing transmembrane protein 1 (292 aa).

The Lumenal portion of the chain corresponds to 1–18 (MERGPVVGAGLGAGARIQ). A helical membrane pass occupies residues 19-39 (ALLGCLLKVLLWVASALLYFG). The Cytoplasmic portion of the chain corresponds to 40–54 (SEQAARLLGSPCLRR). Residues 55 to 75 (LYHAWLAAVVIFGPLLQFHVN) traverse the membrane as a helical segment. Over 76 to 94 (PRTIFASHGNFFNIKFVNS) the chain is Lumenal. A helical membrane pass occupies residues 95 to 115 (AWGWTCTFLGGFVLLVVFLAT). Over 116–141 (RRVAVTARHLSRLVVGAAVWRGAGRA) the chain is Cytoplasmic. The chain crosses the membrane as a helical span at residues 142-162 (FLLIEDLTGSCFEPLPQGLLL). Residues 163–187 (HELPDRRSCLAAGHQWRGYTVSSHT) are Lumenal-facing. His186 is an active-site residue. Residues 188-208 (FLLTFCCLLMAEEAAVFAKYL) traverse the membrane as a helical segment. Residues 209 to 220 (AHGLPAGAPLRL) lie on the Cytoplasmic side of the membrane. A helical membrane pass occupies residues 221–241 (VFLLNVLLLGLWNFLLLCTVI). Residues 242 to 249 (YFHQYTHK) are Lumenal-facing. Residue His244 is part of the active site. A helical membrane pass occupies residues 250 to 270 (VVGAAVGTFAWYLTYGSWYHQ). Over 271–292 (PWSPGSPGHGLFPRPHSSRKHN) the chain is Cytoplasmic.

Belongs to the FIT family. FIT1 subfamily. Primarily expressed in heart and skeletal muscle.

It is found in the endoplasmic reticulum membrane. Plays an important role in the formation of lipid droplets (LDs) which are storage organelles at the center of lipid and energy homeostasis. Directly binds to diacylglycerol (DAGs) and triacylglycerol. The chain is Fat storage-inducing transmembrane protein 1 from Homo sapiens (Human).